Reading from the N-terminus, the 185-residue chain is Elongation factor P (185 aa).

Belongs to the elongation factor P family.

The protein localises to the cytoplasm. It functions in the pathway protein biosynthesis; polypeptide chain elongation. Its function is as follows. Involved in peptide bond synthesis. Stimulates efficient translation and peptide-bond synthesis on native or reconstituted 70S ribosomes in vitro. Probably functions indirectly by altering the affinity of the ribosome for aminoacyl-tRNA, thus increasing their reactivity as acceptors for peptidyl transferase. The sequence is that of Elongation factor P from Herpetosiphon aurantiacus (strain ATCC 23779 / DSM 785 / 114-95).